The sequence spans 88 residues: Small ribosomal subunit protein uS17 (88 aa).

The protein belongs to the universal ribosomal protein uS17 family. Part of the 30S ribosomal subunit.

One of the primary rRNA binding proteins, it binds specifically to the 5'-end of 16S ribosomal RNA. This Oenococcus oeni (strain ATCC BAA-331 / PSU-1) protein is Small ribosomal subunit protein uS17.